Reading from the N-terminus, the 509-residue chain is Lengsin (509 aa).

Positions 1–34 are disordered; the sequence is MNNEEDLLQEDSTRDEGNETEANSMNTLRRTRKK. In terms of domain architecture, GS beta-grasp spans 83 to 177; it reads NRLQFVRFEA…VICDTFTVTG (95 aa). The region spanning 184–509 is the GS catalytic domain; that stretch reads PRYIAKRQLS…ERNKFLEYFI (326 aa).

It belongs to the glutamine synthetase family. Dodecamer. Interacts with BFSP2 and VIM. As to expression, abundantly expressed in lens.

In terms of biological role, may act as a component of the cytoskeleton or as a chaperone for the reorganization of intermediate filament proteins during terminal differentiation in the lens. Does not seem to have enzymatic activity. The sequence is that of Lengsin (LGSN) from Homo sapiens (Human).